We begin with the raw amino-acid sequence, 179 residues long: Large ribosomal subunit protein eL18 (179 aa).

It belongs to the eukaryotic ribosomal protein eL18 family. In terms of assembly, component of the large ribosomal subunit.

Its subcellular location is the cytoplasm. It localises to the cytosol. It is found in the rough endoplasmic reticulum. Functionally, component of the large ribosomal subunit. The ribosome is a large ribonucleoprotein complex responsible for the synthesis of proteins in the cell. The chain is Large ribosomal subunit protein eL18 (rpl18) from Salmo salar (Atlantic salmon).